Reading from the N-terminus, the 498-residue chain is ATP synthase subunit beta, chloroplastic (498 aa).

172-179 provides a ligand contact to ATP; the sequence is GGAGVGKT.

Belongs to the ATPase alpha/beta chains family. In terms of assembly, F-type ATPases have 2 components, CF(1) - the catalytic core - and CF(0) - the membrane proton channel. CF(1) has five subunits: alpha(3), beta(3), gamma(1), delta(1), epsilon(1). CF(0) has four main subunits: a(1), b(1), b'(1) and c(9-12).

The protein resides in the plastid. It localises to the chloroplast thylakoid membrane. The enzyme catalyses ATP + H2O + 4 H(+)(in) = ADP + phosphate + 5 H(+)(out). Functionally, produces ATP from ADP in the presence of a proton gradient across the membrane. The catalytic sites are hosted primarily by the beta subunits. The polypeptide is ATP synthase subunit beta, chloroplastic (Pelargonium hortorum (Common geranium)).